A 394-amino-acid polypeptide reads, in one-letter code: Phosphoglycerate kinase (394 aa).

Residues Asp-21–Asn-23, Arg-36, His-59–Arg-62, Arg-118, and Arg-151 contribute to the substrate site. Ser-183 carries the post-translational modification Phosphoserine. ATP is bound by residues Lys-201 and Gly-292. At Thr-299 the chain carries Phosphothreonine. ATP-binding positions include Glu-323 and Gly-350–Ser-353.

Belongs to the phosphoglycerate kinase family. As to quaternary structure, monomer.

It is found in the cytoplasm. It carries out the reaction (2R)-3-phosphoglycerate + ATP = (2R)-3-phospho-glyceroyl phosphate + ADP. Its pathway is carbohydrate degradation; glycolysis; pyruvate from D-glyceraldehyde 3-phosphate: step 2/5. This Bacillus cereus (strain G9842) protein is Phosphoglycerate kinase.